Here is a 394-residue protein sequence, read N- to C-terminus: Elongation factor Tu (394 aa).

Residues 10–204 (KPHVNVGTIG…AVDSYIPQPE (195 aa)) enclose the tr-type G domain. The G1 stretch occupies residues 19–26 (GHVDHGKT). 19 to 26 (GHVDHGKT) is a GTP binding site. Mg(2+) is bound at residue T26. The interval 60-64 (GITIS) is G2. Positions 81 to 84 (DCPG) are G3. GTP contacts are provided by residues 81–85 (DCPGH) and 136–139 (NKCD). Residues 136–139 (NKCD) form a G4 region. Positions 174–176 (SAV) are G5.

Belongs to the TRAFAC class translation factor GTPase superfamily. Classic translation factor GTPase family. EF-Tu/EF-1A subfamily. In terms of assembly, monomer.

Its subcellular location is the cytoplasm. The catalysed reaction is GTP + H2O = GDP + phosphate + H(+). GTP hydrolase that promotes the GTP-dependent binding of aminoacyl-tRNA to the A-site of ribosomes during protein biosynthesis. The polypeptide is Elongation factor Tu (Akkermansia muciniphila (strain ATCC BAA-835 / DSM 22959 / JCM 33894 / BCRC 81048 / CCUG 64013 / CIP 107961 / Muc)).